Here is a 386-residue protein sequence, read N- to C-terminus: WD repeat-containing protein 89 (386 aa).

WD repeat units follow at residues 21–65 (KEPT…LLRE), 68–107 (GSPG…EKPV), 112–156 (GYPS…QDLS), 167–207 (THSD…EEDA), 213–253 (NSVS…TDEP), and 318–357 (GHAA…KTFT).

This is WD repeat-containing protein 89 (Wdr89) from Mus musculus (Mouse).